The following is a 209-amino-acid chain: NADH-ubiquinone oxidoreductase subunit 9 (209 aa).

Belongs to the complex I 30 kDa subunit family. As to quaternary structure, complex I is composed of about 30 different subunits.

Its subcellular location is the mitochondrion inner membrane. It catalyses the reaction a ubiquinone + NADH + 5 H(+)(in) = a ubiquinol + NAD(+) + 4 H(+)(out). In terms of biological role, core subunit of the mitochondrial membrane respiratory chain NADH dehydrogenase (Complex I) that is believed to belong to the minimal assembly required for catalysis. Complex I functions in the transfer of electrons from NADH to the respiratory chain. The immediate electron acceptor for the enzyme is believed to be ubiquinone. This Paramecium primaurelia protein is NADH-ubiquinone oxidoreductase subunit 9 (NAD9).